Here is a 159-residue protein sequence, read N- to C-terminus: Protein SPA, chloroplastic (159 aa).

A chloroplast-targeting transit peptide spans 1 to 47 (MLTAPSLSRFKSPFISSPLKLPTLSSSFFTQKFHQTCRRRNSYPCIK). Residues 56 to 76 (VIAITVGVLSVAIGVGIPVFY) traverse the membrane as a helical segment. Positions 85–145 (KRENTQPCFP…TCTTCQGSGI (61 aa)) are CR-type-like. CXXCXGXG motif repeat units lie at residues 92–99 (CFPCTGTG), 103–110 (CRFCMGTG), 126–133 (CINCDGAG), and 137–144 (CTTCQGSG).

As to expression, expressed in source leaves. Lower levels of expression in fruits and stems.

Its subcellular location is the plastid. It localises to the chloroplast thylakoid membrane. Participates in determining harvest index (HI) by affecting source-sink carbon distribution. Up-regulates the conversion of fixed carbon to exportable sugars. The polypeptide is Protein SPA, chloroplastic (Solanum lycopersicum (Tomato)).